Consider the following 671-residue polypeptide: TOM1-like protein 6 (671 aa).

Alanine 2 carries the N-acetylalanine modification. Residues 15–144 (ATSDLLLGPD…ELRRSGVEFP (130 aa)) form the VHS domain. Serine 147 carries the phosphoserine modification. Residues 229-317 (EVEGLSLSSI…LLAKHDAIAS (89 aa)) form the GAT domain. Disordered regions lie at residues 320-620 (PLPV…VGQK) and 636-671 (GSAD…RKMI). The span at 334–362 (ASKPADSSPKSSEAKDSSSIAGSSSPIPA) shows a compositional bias: low complexity. Positions 372–382 (DEEYEEEEDEF) are enriched in acidic residues. A compositionally biased stretch (polar residues) spans 395–405 (SVTTDPTSLES). A compositionally biased stretch (low complexity) spans 407-417 (NAASNALALAL). A compositionally biased stretch (pro residues) spans 444–459 (STPPAPSSQPSPPPPA). Positions 483–554 (AQQQQPQQPQ…QPSTRPQNPY (72 aa)) are enriched in low complexity. Polar residues-rich tracts occupy residues 562–598 (ASTS…NSFP) and 605–616 (QATSTASNSGVS). Serine 596 is subject to Phosphoserine. A compositionally biased stretch (low complexity) spans 647-663 (NSSNGSQNLSGSQTQQS).

The protein belongs to the TOM1 family. Ubiquitously expressed.

Its subcellular location is the endosome. The protein localises to the multivesicular body. It is found in the cytoplasm. The protein resides in the early endosome membrane. Acts as a gatekeeper for degradative protein sorting to the vacuole. Plays a role in recognition of ubiquitinated PIN2 auxin carrier at the plasma membrane and further to its endocytic sorting. Binds ubiquitin in vitro. Might contribute to the loading of the ESCRT machinery. The chain is TOM1-like protein 6 from Arabidopsis thaliana (Mouse-ear cress).